Here is a 110-residue protein sequence, read N- to C-terminus: Holo-[acyl-carrier-protein] synthase (110 aa).

Residues aspartate 8 and glutamate 54 each contribute to the Mg(2+) site.

It belongs to the P-Pant transferase superfamily. AcpS family. The cofactor is Mg(2+).

Its subcellular location is the cytoplasm. The catalysed reaction is apo-[ACP] + CoA = holo-[ACP] + adenosine 3',5'-bisphosphate + H(+). Functionally, transfers the 4'-phosphopantetheine moiety from coenzyme A to a Ser of acyl-carrier-protein. The chain is Holo-[acyl-carrier-protein] synthase from Mycoplasma mycoides subsp. mycoides SC (strain CCUG 32753 / NCTC 10114 / PG1).